Here is a 110-residue protein sequence, read N- to C-terminus: Defensin-like protein 296 (110 aa).

An N-terminal signal peptide occupies residues 1–28; it reads MASKITIFFVLALVVVCTMMVCIPTATA. Cystine bridges form between C34-C52, C40-C57, C45-C59, C81-C102, C87-C107, and C95-C109.

It belongs to the DEFL family.

It localises to the secreted. This chain is Defensin-like protein 296, found in Arabidopsis thaliana (Mouse-ear cress).